Reading from the N-terminus, the 365-residue chain is HLA class I histocompatibility antigen, A alpha chain (365 aa).

The signal sequence occupies residues 1 to 24 (MAVMAPRTLLLLLSGALALTQTWA). Residues 3–11 (VMAPRTLLL) form a VL9 epitope region. The segment at 25 to 114 (GSHSMRYFFT…LRGYYNQSEA (90 aa)) is alpha-1. The Extracellular portion of the chain corresponds to 25-308 (GSHSMRYFFT…ELSSQPTIPI (284 aa)). Position 31 (Y31) interacts with a peptide antigen. Y83 is subject to Sulfotyrosine. The a peptide antigen site is built by T97 and Y108. An N-linked (GlcNAc...) asparagine glycan is attached at N110. The tract at residues 115–206 (GSHTIQIMYG…ENGKETLQRT (92 aa)) is alpha-2. C125 and C188 are disulfide-bonded. A peptide antigen contacts are provided by D140, T167, K170, Y183, and Y195. The interval 207 to 298 (DPPKTHMTHH…GLPKPLTLRW (92 aa)) is alpha-3. The Ig-like C1-type domain occupies 209–295 (PKTHMTHHPI…QHEGLPKPLT (87 aa)). C227 and C283 are disulfide-bonded. Residues 299 to 308 (ELSSQPTIPI) are connecting peptide. A helical transmembrane segment spans residues 309 to 332 (VGIIAGLVLLGAVITGAVVAAVMW). Topologically, residues 333 to 365 (RRKSSDRKGGSYTQAASSDSAQGSDVSLTACKV) are cytoplasmic. The interval 339–365 (RKGGSYTQAASSDSAQGSDVSLTACKV) is disordered. Residue S343 is modified to Phosphoserine. At Y344 the chain carries Phosphotyrosine. The span at 346-359 (QAASSDSAQGSDVS) shows a compositional bias: low complexity. Phosphoserine occurs at positions 349, 350, 352, 356, and 359.

It belongs to the MHC class I family. Heterotrimer that consists of an alpha chain HLA-A, a beta chain B2M and a peptide (peptide-HLA-A-B2M). Early in biogenesis, HLA-A-B2M dimer interacts with the components of the peptide-loading complex composed of TAPBP, TAP1-TAP2, TAPBPL, PDIA3/ERP57 and CALR. Interacts with TAP1-TAP2 transporter via TAPBP; this interaction is obligatory for the loading of peptide epitopes delivered to the ER by TAP1-TAP2 transporter. Interacts with TAPBPL; TAPBPL binds peptide-free HLA-A-B2M complexes or those loaded with low affinity peptides, likely facilitating peptide exchange for higher affinity peptides. Only optimally assembled peptide-HLA-B2M trimer translocates to the surface of antigen-presenting cells, where it interacts with TCR and CD8 coreceptor on the surface of T cells. HLA-A (via polymorphic alpha-1 and alpha-2 domains) interacts with antigen-specific TCR (via CDR3 domains). One HLA-A molecule (mainly via nonpolymorphic alpha-3 domain) interacts with one CD8A homodimer (via CDR-like loop); this interaction ensures peptide-HLA-A-B2M recognition by CD8-positive T cells only. Alleles A*23:01; A*24:02 and A*32:01 interact (via Bw4 motif) with KIR3DL1 on NK cells; this interaction is direct. In terms of assembly, (Microbial infection) Interacts with HHV-8 MIR1 protein. As to quaternary structure, (Microbial infection) Interacts with HTLV-1 accessory protein p12I. In terms of processing, (Microbial infection) Polyubiquitinated in a post ER compartment by interaction with human herpesvirus 8 MIR1 protein. This targets the protein for rapid degradation via the ubiquitin system. N-linked glycosylation at Asn-110. In terms of tissue distribution, ubiquitous.

The protein resides in the cell membrane. Its subcellular location is the endoplasmic reticulum membrane. In terms of biological role, antigen-presenting major histocompatibility complex class I (MHCI) molecule. In complex with B2M/beta 2 microglobulin displays primarily viral and tumor-derived peptides on antigen-presenting cells for recognition by alpha-beta T cell receptor (TCR) on HLA-A-restricted CD8-positive T cells, guiding antigen-specific T cell immune response to eliminate infected or transformed cells. May also present self-peptides derived from the signal sequence of secreted or membrane proteins, although T cells specific for these peptides are usually inactivated to prevent autoreactivity. Both the peptide and the MHC molecule are recognized by TCR, the peptide is responsible for the fine specificity of antigen recognition and MHC residues account for the MHC restriction of T cells. Typically presents intracellular peptide antigens of 8 to 13 amino acids that arise from cytosolic proteolysis via IFNG-induced immunoproteasome or via endopeptidase IDE/insulin-degrading enzyme. Can bind different peptides containing allele-specific binding motifs, which are mainly defined by anchor residues at position 2 and 9. Its function is as follows. Allele A*01:01: Presents a restricted peptide repertoire including viral epitopes derived from IAV NP/nucleoprotein (CTELKLSDY), IAV PB1/polymerase basic protein 1 (VSDGGPNLY), HAdV-11 capsid L3/hexon protein (LTDLGQNLLY), SARS-CoV-2 3a/ORF3a (FTSDYYQLY) as well as tumor peptide antigens including MAGE1 (EADPTGHSY), MAGEA3 (EVDPIGHLY) and WT1 (TSEKRPFMCAY), all having in common a canonical motif with a negatively charged Asp or Glu residue at position 3 and a Tyr anchor residue at the C-terminus. A number of HLA-A*01:01-restricted peptides carry a post-translational modification with oxidation and N-terminal acetylation being the most frequent. Fails to present highly immunogenic peptides from the EBV latent antigens. Allele A*02:01: A major allele in human populations, presents immunodominant viral epitopes derived from IAV M/matrix protein 1 (GILGFVFTL), HIV-1 env (TLTSCNTSV), HIV-1 gag-pol (ILKEPVHGV), HTLV-1 Tax (LLFGYPVYV), HBV C/core antigen (FLPSDFFPS), HCMV UL83/pp65 (NLVPMVATV) as well as tumor peptide antigens including MAGEA4 (GVYDGREHTV), WT1 (RMFPNAPYL) and CTAG1A/NY-ESO-1 (SLLMWITQC), all having in common hydrophobic amino acids at position 2 and at the C-terminal anchors. Functionally, allele A*03:01: Presents viral epitopes derived from IAV NP (ILRGSVAHK), HIV-1 nef (QVPLRPMTYK), HIV-1 gag-pol (AIFQSSMTK), SARS-CoV-2 N/nucleoprotein (KTFPPTEPK) as well as tumor peptide antigens including PMEL (LIYRRRLMK), NODAL (HAYIQSLLK), TRP-2 (RMYNMVPFF), all having in common hydrophobic amino acids at position 2 and Lys or Arg anchor residues at the C-terminus. May also display spliced peptides resulting from the ligation of two separate proteasomal cleavage products that are not contiguous in the parental protein. In terms of biological role, allele A*11:01: Presents several immunodominant epitopes derived from HIV-1 gag-pol and HHV-4 EBNA4, containing the peptide motif with Val, Ile, Thr, Leu, Tyr or Phe at position 2 and Lys anchor residue at the C-terminus. Important in the control of HIV-1, EBV and HBV infections. Presents an immunodominant epitope derived from SARS-CoV-2 N/nucleoprotein (KTFPPTEPK). Its function is as follows. Allele A*23:01: Interacts with natural killer (NK) cell receptor KIR3DL1 and may contribute to functional maturation of NK cells and self-nonself discrimination during innate immune response. Allele A*24:02: Presents viral epitopes derived from HIV-1 nef (RYPLTFGWCF), EBV lytic- and latent-cycle antigens BRLF1 (TYPVLEEMF), BMLF1 (DYNFVKQLF) and LMP2 (IYVLVMLVL), SARS-CoV nucleocapsid/N (QFKDNVILL), as well as tumor peptide antigens including PRAME (LYVDSLFFL), all sharing a common signature motif, namely an aromatic residue Tyr or Phe at position 2 and a nonhydrophobic anchor residue Phe, Leu or Iso at the C-terminus. Interacts with natural killer (NK) cell receptor KIR3DL1 and may contribute to functional maturation of NK cells and self-nonself discrimination during innate immune response. Functionally, allele A*26:01: Presents several epitopes derived from HIV-1 gag-pol (EVIPMFSAL, ETKLGKAGY) and env (LVSDGGPNLY), carrying as anchor residues preferentially Glu at position 1, Val or Thr at position 2 and Tyr at the C-terminus. In terms of biological role, allele A*29:02: Presents peptides having a common motif, namely a Glu residue at position 2 and Tyr or Leu anchor residues at the C-terminus. Its function is as follows. Allele A*32:01: Interacts with natural killer (NK) cell receptor KIR3DL1 and may contribute to functional maturation of NK cells and self-nonself discrimination during innate immune response. Allele A*68:01: Presents viral epitopes derived from IAV NP (KTGGPIYKR) and HIV-1 tat (ITKGLGISYGR), having a common signature motif namely, Val or Thr at position 2 and positively charged residues Arg or Lys at the C-terminal anchor. Functionally, allele A*74:01: Presents immunodominant HIV-1 epitopes derived from gag-pol (GQMVHQAISPR, QIYPGIKVR) and rev (RQIHSISER), carrying an aliphatic residue at position 2 and Arg anchor residue at the C-terminus. May contribute to viral load control in chronic HIV-1 infection. The chain is HLA class I histocompatibility antigen, A alpha chain from Homo sapiens (Human).